Reading from the N-terminus, the 392-residue chain is Selenide, water dikinase 1 (392 aa).

Residue S2 is modified to N-acetylserine. C31 is a catalytic residue. Residues K32, 67–69 (GMD), D87, D110, and 161–164 (GGQT) contribute to the ATP site. D69 is a Mg(2+) binding site. Residue D110 participates in Mg(2+) binding. Residue D265 participates in Mg(2+) binding.

It belongs to the selenophosphate synthase 1 family. Class II subfamily. Homodimer. Mg(2+) is required as a cofactor.

Its subcellular location is the cell membrane. It is found in the nucleus membrane. The catalysed reaction is hydrogenselenide + ATP + H2O = selenophosphate + AMP + phosphate + 2 H(+). Its function is as follows. Synthesizes selenophosphate from selenide and ATP. The chain is Selenide, water dikinase 1 (Sephs1) from Mus musculus (Mouse).